We begin with the raw amino-acid sequence, 528 residues long: Putative B3 domain-containing protein REM15 (528 aa).

DNA-binding regions (TF-B3) lie at residues 3 to 95 and 135 to 231; these read HQHF…LGPS and CFVA…LPNE. Residues 234–253 form a disordered region; it reads EEANEVSLPEEPESDAERNL. 2 consecutive DNA-binding regions (TF-B3) follow at residues 279 to 376 and 425 to 522; these read CFVA…IPNE and QSSL…FCSK.

The protein localises to the nucleus. This Arabidopsis thaliana (Mouse-ear cress) protein is Putative B3 domain-containing protein REM15 (REM15.15).